A 156-amino-acid chain; its full sequence is Endoribonuclease YbeY (156 aa).

His-119, His-123, and His-129 together coordinate Zn(2+).

It belongs to the endoribonuclease YbeY family. Zn(2+) is required as a cofactor.

Its subcellular location is the cytoplasm. Single strand-specific metallo-endoribonuclease involved in late-stage 70S ribosome quality control and in maturation of the 3' terminus of the 16S rRNA. The polypeptide is Endoribonuclease YbeY (Buchnera aphidicola subsp. Cinara cedri (strain Cc)).